Reading from the N-terminus, the 242-residue chain is MKILIPTAKEMNTDLPSIEAIPLKPESQTVLDALALYSASQLESFYKVSAEKAAEEFQNIQALKRQTAQHYPALKLFDGLMYRNIKRDKLTEAEQDYLENHVFITSALYGVVPALSPMAPHRLDFLMKLKVAGKTLKSHWKAVYDEALKKEEVIFSLLSSEFETVFSKEIRAKMVTFKFMEDRGGQLKIHSTISKKARGAFLTALIENQVQTVGEARRLNFAGFVYREDLSQPQGLVFVKEV.

It belongs to the UPF0246 family.

This chain is UPF0246 protein SPD_1378, found in Streptococcus pneumoniae serotype 2 (strain D39 / NCTC 7466).